Reading from the N-terminus, the 239-residue chain is Probable fimbrial chaperone YehC (239 aa).

An N-terminal signal peptide occupies residues 1–31; it reads MAAIPWRPFNLRGIKMKGLLSLLIFSMVLPA.

It belongs to the periplasmic pilus chaperone family.

Its subcellular location is the periplasm. Functionally, part of the yehABCD fimbrial operon. Could contribute to adhesion to various surfaces in specific environmental niches. In Escherichia coli (strain K12), this protein is Probable fimbrial chaperone YehC (yehC).